The chain runs to 736 residues: MKRAADGMEKPKFLTREEREKLALERRQAAVTDQRRSALDLLQSLPRPPPPPPPPLSNPPRDSSSSHHRDSSDRDRDRDRDRDRDRDRDRDRERRRDDDSRRDRDRDRDRDRGDSSRRDRDRERGDRDRDRDRERGDRDRERGDREKDRLEKMAEREREKELDAIKEQYLGSKKPKKRVIKPSEKFRFSFDWENTEDTSRDMNSLYQSPHEARLLYGRGFLAGIDRREQKKVAAAHEKETRAEQRRKAGLDDRPEDDAVDKKEADAAAKYDAFDMRVDRHWTQKSLDEMTERDWRIFREDFNISYKGSKVPRPMRKWSESKLGTELLRAVEKAGYKEPSPIQMASIPLGLQQRDVIGIAETGSGKTAAFVLPMLSYITRLPPISEENEAEGPYAVVMAPTRELAQQIEEETVKFATYLGIKVVSIVGGQSIEEQGFKIRQGCEVVIATPGRLLDCLERRYAVLNQCNYVVLDEADRMIDMGFEPQVVGVLDAMPSSNLKPENEDEELDAKTIYRTTYMFSATMPPAVERLARKYLRNPVVVTIGTAGKATDLITQNVIMTKESEKMSRLQKILTDLGDKPAIVFCNTKKSADARAKDLDKAGFRVTTLHGGKSQEQRETSLDGFRNRRFTVLVATDVAGRGIDIPDVAHVINYEMPSSIDTYTHRIGRTGRAGKKGLATSFLTLENTDIFFDLKQMLIQSNSPVPPELARHEASKFKPGSVPDRPPRRNDTVYATH.

The stretch at 14–38 forms a coiled coil; sequence LTREEREKLALERRQAAVTDQRRSA. Positions 25-38 are enriched in basic and acidic residues; sequence ERRQAAVTDQRRSA. Disordered regions lie at residues 25–178 and 231–263; these read ERRQ…PKKR and KVAA…DKKE. The span at 46 to 58 shows a compositional bias: pro residues; sequence PRPPPPPPPPLSN. Basic and acidic residues-rich tracts occupy residues 64-166 and 231-252; these read SSSH…DAIK and KVAA…GLDD. A coiled-coil region spans residues 137–167; it reads DRDRERGDREKDRLEKMAEREREKELDAIKE. Residues 315 to 343 carry the Q motif motif; that stretch reads RKWSESKLGTELLRAVEKAGYKEPSPIQM. The Helicase ATP-binding domain occupies 346-541; the sequence is IPLGLQQRDV…RKYLRNPVVV (196 aa). 359–366 contributes to the ATP binding site; it reads AETGSGKT. The DEAD box signature appears at 472–475; it reads DEAD. Residues 568–712 form the Helicase C-terminal domain; the sequence is RLQKILTDLG…PVPPELARHE (145 aa). Positions 704–736 are disordered; sequence VPPELARHEASKFKPGSVPDRPPRRNDTVYATH.

It belongs to the DEAD box helicase family. DDX23/PRP28 subfamily.

It localises to the cytoplasm. It is found in the nucleus. It catalyses the reaction ATP + H2O = ADP + phosphate + H(+). In terms of biological role, ATP-dependent RNA helicase involved in mRNA splicing. May destabilize the U1/5'-splice site duplex to permit an effective competition for the 5'-splice site by the U6 snRNA, resulting in the switch between U1 and U6 at the 5'-splice site. May also act to unwind the U4/U6 base-pairing interaction in the U4/U6/U5 snRNP, facilitating the first covalent step of splicing. The polypeptide is DEAD-box ATP-dependent RNA helicase 21 (Oryza sativa subsp. japonica (Rice)).